The sequence spans 666 residues: DNA mismatch repair protein MutL (666 aa).

The protein belongs to the DNA mismatch repair MutL/HexB family.

This protein is involved in the repair of mismatches in DNA. It is required for dam-dependent methyl-directed DNA mismatch repair. May act as a 'molecular matchmaker', a protein that promotes the formation of a stable complex between two or more DNA-binding proteins in an ATP-dependent manner without itself being part of a final effector complex. The protein is DNA mismatch repair protein MutL of Clostridium botulinum (strain Kyoto / Type A2).